The primary structure comprises 315 residues: Prephenate dehydratase (315 aa).

The Prephenate dehydratase domain maps to 3–189 (RIAYLGPEGT…ARTRFVLVGP (187 aa)). The ACT domain maps to 203-280 (SVVLRIDNAP…ADVRYLGSWP (78 aa)).

Homodimer.

The catalysed reaction is prephenate + H(+) = 3-phenylpyruvate + CO2 + H2O. It participates in amino-acid biosynthesis; L-phenylalanine biosynthesis; phenylpyruvate from prephenate: step 1/1. The protein is Prephenate dehydratase (pheA) of Mycobacterium avium (strain 104).